Here is a 296-residue protein sequence, read N- to C-terminus: Ribosomal RNA small subunit methyltransferase A (296 aa).

Asn31, Leu33, Gly58, Glu79, Asp104, and Asn129 together coordinate S-adenosyl-L-methionine.

This sequence belongs to the class I-like SAM-binding methyltransferase superfamily. rRNA adenine N(6)-methyltransferase family. RsmA subfamily.

It is found in the cytoplasm. It carries out the reaction adenosine(1518)/adenosine(1519) in 16S rRNA + 4 S-adenosyl-L-methionine = N(6)-dimethyladenosine(1518)/N(6)-dimethyladenosine(1519) in 16S rRNA + 4 S-adenosyl-L-homocysteine + 4 H(+). Functionally, specifically dimethylates two adjacent adenosines (A1518 and A1519) in the loop of a conserved hairpin near the 3'-end of 16S rRNA in the 30S particle. May play a critical role in biogenesis of 30S subunits. The protein is Ribosomal RNA small subunit methyltransferase A of Shouchella clausii (strain KSM-K16) (Alkalihalobacillus clausii).